The chain runs to 301 residues: 33 kDa chaperonin (301 aa).

2 disulfides stabilise this stretch: C239–C241 and C272–C275.

The protein belongs to the HSP33 family. In terms of processing, under oxidizing conditions two disulfide bonds are formed involving the reactive cysteines. Under reducing conditions zinc is bound to the reactive cysteines and the protein is inactive.

The protein localises to the cytoplasm. In terms of biological role, redox regulated molecular chaperone. Protects both thermally unfolding and oxidatively damaged proteins from irreversible aggregation. Plays an important role in the bacterial defense system toward oxidative stress. The polypeptide is 33 kDa chaperonin (Trichormus variabilis (strain ATCC 29413 / PCC 7937) (Anabaena variabilis)).